The chain runs to 357 residues: UPF0283 membrane protein HSM_0945 (357 aa).

The next 3 helical transmembrane spans lie at 67–87 (LMATICLFSCGILAQSVQWLV), 96–116 (IAFVFAMVSLFLVLLGLGTII), and 213–233 (AVESALIVAVSPLAIVDMFFI).

Belongs to the UPF0283 family.

It localises to the cell inner membrane. This is UPF0283 membrane protein HSM_0945 from Histophilus somni (strain 2336) (Haemophilus somnus).